The following is a 141-amino-acid chain: Transcription antitermination protein NusB (141 aa).

The protein belongs to the NusB family.

Its function is as follows. Involved in transcription antitermination. Required for transcription of ribosomal RNA (rRNA) genes. Binds specifically to the boxA antiterminator sequence of the ribosomal RNA (rrn) operons. The protein is Transcription antitermination protein NusB of Neisseria meningitidis serogroup B (strain ATCC BAA-335 / MC58).